The following is a 329-amino-acid chain: Olfactory receptor 5AL1 (329 aa).

Topologically, residues 1–44 are extracellular; that stretch reads MCALKGFLEENFYTYSVAKGNHSTVYEFILLGLTDNAELQVTLF. Asn21 carries an N-linked (GlcNAc...) asparagine glycan. The chain crosses the membrane as a helical span at residues 45-65; it reads GIFLVVYLASFMGNFGLIMLI. Over 66–73 the chain is Cytoplasmic; that stretch reads QISPQLHT. A helical transmembrane segment spans residues 74-94; sequence PMYFFLSHLAFVDFSFTSSVA. The Extracellular segment spans residues 95–113; it reads PNTLVNFLCEVKSITFYAC. The cysteines at positions 113 and 205 are disulfide-linked. The helical transmembrane segment at 114-134 threads the bilayer; the sequence is AIQVCCFITFVVCELYLLSIM. The Cytoplasmic segment spans residues 135 to 157; it reads AYDRYVAICNPLLYVILIPRKLC. Residues 158-178 form a helical membrane-spanning segment; the sequence is IKLIASTYVYGFTVGLVQTVA. Residues 179 to 220 are Extracellular-facing; that stretch reads TSYLSFCDSNVINHFYHDDVPLVALACSDTHVKELMLLIIAG. Residues 221 to 241 traverse the membrane as a helical segment; the sequence is FNTLCSLVIVLISYGFIFFAI. At 242–253 the chain is on the cytoplasmic side; it reads LRIHSAEGRQKA. A helical transmembrane segment spans residues 254–274; that stretch reads FSTSASHLTSITIFYGTIIFM. Over 275-287 the chain is Extracellular; the sequence is YPQPKSSHSLNMD. The chain crosses the membrane as a helical span at residues 288-308; sequence KVASVFNVVVIPTLNPLIYSL. The Cytoplasmic segment spans residues 309–329; that stretch reads RNQEVKNALKRIIEKLCLAVK.

It belongs to the G-protein coupled receptor 1 family.

The protein localises to the cell membrane. In terms of biological role, odorant receptor. The sequence is that of Olfactory receptor 5AL1 (OR5AL1) from Homo sapiens (Human).